The chain runs to 306 residues: Hydroxypyruvate reductase (306 aa).

Residues 152–153 (NI), Asp-172, 228–230 (TAR), and Asp-254 contribute to the NAD(+) site. The active site involves Arg-230. Glu-259 is a catalytic residue. His-280 functions as the Proton donor in the catalytic mechanism. 280-283 (HIGA) provides a ligand contact to NAD(+).

It belongs to the D-isomer specific 2-hydroxyacid dehydrogenase family.

It catalyses the reaction (R)-glycerate + NAD(+) = 3-hydroxypyruvate + NADH + H(+). It carries out the reaction (R)-glycerate + NADP(+) = 3-hydroxypyruvate + NADPH + H(+). In terms of biological role, involved in the degradation of L-serine via 3-hydroxypyruvate. Catalyzes the non-reversible reduction of 3-hydroxypyruvate to yield D-glycerate. The chain is Hydroxypyruvate reductase from Thermotoga maritima (strain ATCC 43589 / DSM 3109 / JCM 10099 / NBRC 100826 / MSB8).